Reading from the N-terminus, the 238-residue chain is 1-(5-phosphoribosyl)-5-[(5-phosphoribosylamino)methylideneamino] imidazole-4-carboxamide isomerase (238 aa).

The active-site Proton acceptor is Asp-8. The active-site Proton donor is Asp-130.

The protein belongs to the HisA/HisF family.

It is found in the cytoplasm. It catalyses the reaction 1-(5-phospho-beta-D-ribosyl)-5-[(5-phospho-beta-D-ribosylamino)methylideneamino]imidazole-4-carboxamide = 5-[(5-phospho-1-deoxy-D-ribulos-1-ylimino)methylamino]-1-(5-phospho-beta-D-ribosyl)imidazole-4-carboxamide. Its pathway is amino-acid biosynthesis; L-histidine biosynthesis; L-histidine from 5-phospho-alpha-D-ribose 1-diphosphate: step 4/9. This is 1-(5-phosphoribosyl)-5-[(5-phosphoribosylamino)methylideneamino] imidazole-4-carboxamide isomerase from Methanococcus maripaludis (strain C5 / ATCC BAA-1333).